Reading from the N-terminus, the 203-residue chain is Arcadin-2 (203 aa).

Interacts with crenactin.

It localises to the cytoplasm. The protein localises to the cytoskeleton. Part of an actin-like archaeal cytoskeleton. Prevents polymerization of crenactin filaments by binding its C-terminus into crenactin's hydrophobic groove. May act by competing with the D-loop of the following crenactin subunit for the hydrophobic groove. In Pyrobaculum calidifontis (strain DSM 21063 / JCM 11548 / VA1), this protein is Arcadin-2.